Consider the following 280-residue polypeptide: Diaminopimelate epimerase (280 aa).

Asparagine 11 and asparagine 64 together coordinate substrate. Cysteine 73 serves as the catalytic Proton donor. Residues 74–75 (GN), asparagine 162, asparagine 195, and 213–214 (ER) each bind substrate. Cysteine 222 serves as the catalytic Proton acceptor. Substrate is bound at residue 223–224 (GT).

This sequence belongs to the diaminopimelate epimerase family. In terms of assembly, homodimer.

Its subcellular location is the cytoplasm. The enzyme catalyses (2S,6S)-2,6-diaminopimelate = meso-2,6-diaminopimelate. It participates in amino-acid biosynthesis; L-lysine biosynthesis via DAP pathway; DL-2,6-diaminopimelate from LL-2,6-diaminopimelate: step 1/1. Its function is as follows. Catalyzes the stereoinversion of LL-2,6-diaminopimelate (L,L-DAP) to meso-diaminopimelate (meso-DAP), a precursor of L-lysine and an essential component of the bacterial peptidoglycan. This is Diaminopimelate epimerase from Pelotomaculum thermopropionicum (strain DSM 13744 / JCM 10971 / SI).